We begin with the raw amino-acid sequence, 300 residues long: Oxidoreductase BOA1 (300 aa).

This sequence belongs to the NmrA-type oxidoreductase family. Isoflavone reductase subfamily.

Its pathway is polyketide biosynthesis. Oxidoreductase; part of the gene cluster A that mediates the biosynthesis of botcinic acid and its botcinin derivatives, acetate-derived polyketides that contribute to virulence when combined with the sesquiterpene botrydial. Botcinic acid and its derivatives have been shown to induce chlorosis and necrosis during host plant infection, but also have antifungal activities. Two polyketide synthases, BOA6 and BOA9, are involved in the biosynthesis of botcinins. BOA6 mediates the formation of the per-methylated tetraketide core by condensation of four units of malonyl-CoA with one unit of acetyl-CoA, which would be methylated in activated methylene groups to yield a bicyclic acid intermediate that could then either be converted to botrylactone derivatives or lose the starter acetate unit through a retro-Claisen type C-C bond cleavage to yield botcinin derivatives. The second polyketide synthase, BOA9, is probably required for the biosynthesis of the tetraketide side chain of botcinins. The methyltransferase (MT) domain within BOA6 is probably responsible for the incorporation of four methyl groups. The trans-enoyl reductase BOA5 might take over the enoyl reductase function of BOA6 that misses an ER domain. The monooxygenases BOA2, BOA3 and BOA4 might be involved in further hydroxylations at C4, C5 and C8, whereas BOA7, close to BOA9, could potentially be involved in the hydroxylation at C4 in the side chain of botcinins. In Botryotinia fuckeliana (strain B05.10) (Noble rot fungus), this protein is Oxidoreductase BOA1.